We begin with the raw amino-acid sequence, 137 residues long: Nucleoside diphosphate kinase (137 aa).

Residues Lys-9, Phe-57, Arg-85, Thr-91, Arg-102, and Asn-112 each coordinate ATP. His-115 (pros-phosphohistidine intermediate) is an active-site residue.

Belongs to the NDK family. As to quaternary structure, homotetramer. It depends on Mg(2+) as a cofactor.

It is found in the cytoplasm. The enzyme catalyses a 2'-deoxyribonucleoside 5'-diphosphate + ATP = a 2'-deoxyribonucleoside 5'-triphosphate + ADP. It catalyses the reaction a ribonucleoside 5'-diphosphate + ATP = a ribonucleoside 5'-triphosphate + ADP. Functionally, major role in the synthesis of nucleoside triphosphates other than ATP. The ATP gamma phosphate is transferred to the NDP beta phosphate via a ping-pong mechanism, using a phosphorylated active-site intermediate. The chain is Nucleoside diphosphate kinase from Desulfotalea psychrophila (strain LSv54 / DSM 12343).